A 1496-amino-acid chain; its full sequence is DENN domain-containing protein 4B (1496 aa).

Positions 44–203 (AEPITDVAVI…AVYLCYKVGL (160 aa)) constitute an MABP domain. One can recognise a uDENN domain in the interval 195–369 (VYLCYKVGLA…NVPFPSPQRP (175 aa)). The 137-residue stretch at 390–526 (PLPLSGASFL…PYKVLLATLT (137 aa)) folds into the cDENN domain. The dDENN domain maps to 528-644 (LYQQLDQTYT…ECSFGSARHA (117 aa)). The tract at residues 720 to 744 (QPGALPVPGPSRSAPSSPAPRRTKQ) is disordered. The span at 729-739 (PSRSAPSSPAP) shows a compositional bias: low complexity. 2 PPR repeats span residues 775–811 (WFLC…VVLP) and 812–846 (DEVC…GIVP). 4 disordered regions span residues 891–970 (LRER…ARGA), 995–1055 (VPWH…TPRR), 1067–1119 (PSRH…GSEW), and 1205–1227 (SRPS…PVPG). Over residues 896–912 (QQQQQQQQQQQQQQQEQ) the composition is skewed to low complexity. Composition is skewed to polar residues over residues 913–924 (VSAHQEAGSSQA) and 935–944 (RPLQRQTTWA). S953 carries the phosphoserine modification. The segment covering 1075–1090 (RIPPPELPPDLPPPAR) has biased composition (pro residues). S1092 carries the post-translational modification Phosphoserine. Positions 1105-1119 (GSTASESSASLGSEW) are enriched in low complexity.

It localises to the golgi apparatus. Functionally, guanine nucleotide exchange factor (GEF) which may activate RAB10. Promotes the exchange of GDP to GTP, converting inactive GDP-bound Rab proteins into their active GTP-bound form. This is DENN domain-containing protein 4B (DENND4B) from Homo sapiens (Human).